We begin with the raw amino-acid sequence, 38 residues long: Large ribosomal subunit protein bL36 (38 aa).

Belongs to the bacterial ribosomal protein bL36 family.

This is Large ribosomal subunit protein bL36 from Porphyromonas gingivalis (strain ATCC 33277 / DSM 20709 / CIP 103683 / JCM 12257 / NCTC 11834 / 2561).